The chain runs to 215 residues: UPF0502 protein Ping_1905 (215 aa).

The protein belongs to the UPF0502 family.

The protein is UPF0502 protein Ping_1905 of Psychromonas ingrahamii (strain DSM 17664 / CCUG 51855 / 37).